The sequence spans 65 residues: UPF0434 protein Mmwyl1_2153 (65 aa).

The protein belongs to the UPF0434 family.

The protein is UPF0434 protein Mmwyl1_2153 of Marinomonas sp. (strain MWYL1).